A 189-amino-acid chain; its full sequence is Elongation factor P (189 aa).

Belongs to the elongation factor P family.

It is found in the cytoplasm. Its pathway is protein biosynthesis; polypeptide chain elongation. Its function is as follows. Involved in peptide bond synthesis. Stimulates efficient translation and peptide-bond synthesis on native or reconstituted 70S ribosomes in vitro. Probably functions indirectly by altering the affinity of the ribosome for aminoacyl-tRNA, thus increasing their reactivity as acceptors for peptidyl transferase. This is Elongation factor P from Pseudomonas entomophila (strain L48).